A 330-amino-acid polypeptide reads, in one-letter code: RNA polymerase sigma factor RpoS (330 aa).

The segment at 56–89 (DATQLYLGEIGYSPLLTAEEEVYFARRALRGDVA) is sigma-70 factor domain-1. Residues 94 to 164 (MIESNLRLVV…ERAIMNQTRT (71 aa)) are sigma-70 factor domain-2. Residues 118–121 (DLIE) carry the Interaction with polymerase core subunit RpoC motif. A sigma-70 factor domain-3 region spans residues 174 to 249 (ELNVYLRTAR…DEKENGPEDT (76 aa)). Positions 262–315 (WLFELNAKQREVLARRFGLLGYEAATLEDVGREIGLTRERVRQIQVEGLRRLRE) are sigma-70 factor domain-4. Residues 288–307 (LEDVGREIGLTRERVRQIQV) constitute a DNA-binding region (H-T-H motif).

The protein belongs to the sigma-70 factor family. RpoS subfamily. Interacts with the RNA polymerase core enzyme.

It is found in the cytoplasm. Sigma factors are initiation factors that promote the attachment of RNA polymerase to specific initiation sites and are then released. This sigma factor is the master transcriptional regulator of the stationary phase and the general stress response. The protein is RNA polymerase sigma factor RpoS of Shigella flexneri.